The chain runs to 477 residues: Aspartyl/glutamyl-tRNA(Asn/Gln) amidotransferase subunit B (477 aa).

The protein belongs to the GatB/GatE family. GatB subfamily. Heterotrimer of A, B and C subunits.

It carries out the reaction L-glutamyl-tRNA(Gln) + L-glutamine + ATP + H2O = L-glutaminyl-tRNA(Gln) + L-glutamate + ADP + phosphate + H(+). It catalyses the reaction L-aspartyl-tRNA(Asn) + L-glutamine + ATP + H2O = L-asparaginyl-tRNA(Asn) + L-glutamate + ADP + phosphate + 2 H(+). Functionally, allows the formation of correctly charged Asn-tRNA(Asn) or Gln-tRNA(Gln) through the transamidation of misacylated Asp-tRNA(Asn) or Glu-tRNA(Gln) in organisms which lack either or both of asparaginyl-tRNA or glutaminyl-tRNA synthetases. The reaction takes place in the presence of glutamine and ATP through an activated phospho-Asp-tRNA(Asn) or phospho-Glu-tRNA(Gln). The chain is Aspartyl/glutamyl-tRNA(Asn/Gln) amidotransferase subunit B from Lactococcus lactis subsp. cremoris (strain MG1363).